The primary structure comprises 494 residues: MQVIETLAEGLKREIKVVIPAKDMQDKMNERLADVKDKVRINGFRPGKVPAAHLKKVYGKSIMADLVNEIVREQPAAILSSRGEKSATQPEIAMTEDKDEADKILAAEQDFEFTLSYEVLPPIELKSVKGIKVTREVIDISDDEVNEQVLKVAESARAYETKTGKAANGDRITMDYVGKVDGEAFEGGTDQGAELVLGSGRFIPGFEDQLVGVKAGAEKTITVTFPADYPAKNLAGKEATFDVTVKEVAAPADVEINDELASKLGIESADRLKEIVRGQIESQYGSLTRQKLKRQILDQLDEMYKFETPNSLVDAEYNGIWSQVNNDLAQSGKTFEDEDTTEEKAREEYKTLAERRVRLGLVLSEIGEKAGVEVSEDEMQRAIYDQLRQYPGQEKQILEFFRSQPGAAASIRAPIFEEKVIDHLLTEIDVTDKKVTKEELLAEEEGEAKAETKKAAPKKKAAAKAEAADAGEGEEAAPKKKAAPKKKAADESAE.

One can recognise a PPIase FKBP-type domain in the interval 169–254 (GDRITMDYVG…VKEVAAPADV (86 aa)). The interval 441–494 (LAEEEGEAKAETKKAAPKKKAAAKAEAADAGEGEEAAPKKKAAPKKKAADESAE) is disordered.

Belongs to the FKBP-type PPIase family. Tig subfamily.

The protein localises to the cytoplasm. The catalysed reaction is [protein]-peptidylproline (omega=180) = [protein]-peptidylproline (omega=0). In terms of biological role, involved in protein export. Acts as a chaperone by maintaining the newly synthesized protein in an open conformation. Functions as a peptidyl-prolyl cis-trans isomerase. This chain is Trigger factor, found in Rhizobium johnstonii (strain DSM 114642 / LMG 32736 / 3841) (Rhizobium leguminosarum bv. viciae).